A 508-amino-acid polypeptide reads, in one-letter code: Photosystem II CP47 reaction center protein (508 aa).

Transmembrane regions (helical) follow at residues 21 to 36, 101 to 115, 140 to 156, 203 to 218, 237 to 252, and 457 to 472; these read SVHIMHTALVAGWAGS, IVFSGLCFLAAIWHW, GIHLFLAGVACFGFGAF, IAAGTLGILAGLFHLS, VLSSSIAAVFFAAFVV, and SFALLFFFGHIWHGAR.

Belongs to the PsbB/PsbC family. PsbB subfamily. As to quaternary structure, PSII is composed of 1 copy each of membrane proteins PsbA, PsbB, PsbC, PsbD, PsbE, PsbF, PsbH, PsbI, PsbJ, PsbK, PsbL, PsbM, PsbT, PsbX, PsbY, PsbZ, Psb30/Ycf12, at least 3 peripheral proteins of the oxygen-evolving complex and a large number of cofactors. It forms dimeric complexes. Binds multiple chlorophylls. PSII binds additional chlorophylls, carotenoids and specific lipids. is required as a cofactor.

The protein localises to the plastid. The protein resides in the chloroplast thylakoid membrane. One of the components of the core complex of photosystem II (PSII). It binds chlorophyll and helps catalyze the primary light-induced photochemical processes of PSII. PSII is a light-driven water:plastoquinone oxidoreductase, using light energy to abstract electrons from H(2)O, generating O(2) and a proton gradient subsequently used for ATP formation. The polypeptide is Photosystem II CP47 reaction center protein (Phaseolus vulgaris (Kidney bean)).